A 464-amino-acid chain; its full sequence is Glutamate--tRNA ligase 1 (464 aa).

The 'HIGH' region motif lies at 8–18; sequence PSPTGHLHVGG. The 'KMSKS' region motif lies at 231–235; that stretch reads PLSKR. Lysine 234 contributes to the ATP binding site.

This sequence belongs to the class-I aminoacyl-tRNA synthetase family. Glutamate--tRNA ligase type 1 subfamily. Monomer.

The protein resides in the cytoplasm. The enzyme catalyses tRNA(Glu) + L-glutamate + ATP = L-glutamyl-tRNA(Glu) + AMP + diphosphate. Its function is as follows. Catalyzes the attachment of glutamate to tRNA(Glu) in a two-step reaction: glutamate is first activated by ATP to form Glu-AMP and then transferred to the acceptor end of tRNA(Glu). The protein is Glutamate--tRNA ligase 1 of Thermotoga sp. (strain RQ2).